Here is a 212-residue protein sequence, read N- to C-terminus: Adenylate kinase (212 aa).

Position 10-15 (10-15 (GAGKGT)) interacts with ATP. Residues 30–59 (STGDILREAMAQETELGQKAKSYIDAGELV) form an NMP region. AMP-binding positions include threonine 31, arginine 36, 57–59 (ELV), 84–87 (GYPR), and glutamine 91. Positions 125–158 (RRRVHEETGETYHLDHDPPPEDVDPDLIVQRSDD) are LID. ATP is bound by residues arginine 126 and 135-136 (TY). Arginine 155 and arginine 166 together coordinate AMP. Glycine 194 contacts ATP.

The protein belongs to the adenylate kinase family. Monomer.

The protein resides in the cytoplasm. The catalysed reaction is AMP + ATP = 2 ADP. Its pathway is purine metabolism; AMP biosynthesis via salvage pathway; AMP from ADP: step 1/1. Its function is as follows. Catalyzes the reversible transfer of the terminal phosphate group between ATP and AMP. Plays an important role in cellular energy homeostasis and in adenine nucleotide metabolism. The protein is Adenylate kinase of Salinibacter ruber (strain DSM 13855 / M31).